A 221-amino-acid chain; its full sequence is Endonuclease V (221 aa).

2 residues coordinate Mg(2+): D44 and D112.

It belongs to the endonuclease V family. The cofactor is Mg(2+).

It localises to the cytoplasm. The catalysed reaction is Endonucleolytic cleavage at apurinic or apyrimidinic sites to products with a 5'-phosphate.. Functionally, DNA repair enzyme involved in the repair of deaminated bases. Selectively cleaves double-stranded DNA at the second phosphodiester bond 3' to a deoxyinosine leaving behind the intact lesion on the nicked DNA. The chain is Endonuclease V from Trichormus variabilis (strain ATCC 29413 / PCC 7937) (Anabaena variabilis).